Reading from the N-terminus, the 177-residue chain is Thymidine kinase (177 aa).

Residue 11–18 (GPMFSGKS) coordinates ATP. Residue Glu83 is the Proton acceptor of the active site. Phe113 contributes to the substrate binding site. Positions 138 and 141 each coordinate Zn(2+). 157–161 (IEIIG) is a binding site for substrate. Zn(2+) contacts are provided by Cys170 and Cys173.

This sequence belongs to the thymidine kinase family. In terms of assembly, homotetramer. Two molecules of substrate bind to each enzyme tetramer.

The catalysed reaction is thymidine + ATP = dTMP + ADP + H(+). Functionally, phosphorylates thymidine and thymidine analogs, such as azidothymidine (AZT). Part of the salvage pathway for pyrimidine deoxyribonucleotide synthesis. The protein is Thymidine kinase (OPG101) of Variola virus.